A 478-amino-acid polypeptide reads, in one-letter code: Putative multidrug resistance outer membrane protein MdtQ (478 aa).

Residues 1–21 form the signal peptide; the sequence is MNRDSFYPAIACFPLLLMLAG. Residue Cys22 is the site of N-palmitoyl cysteine attachment. The S-diacylglycerol cysteine moiety is linked to residue Cys22.

This sequence belongs to the outer membrane factor (OMF) (TC 1.B.17) family.

Its subcellular location is the cell outer membrane. In terms of biological role, could be involved in resistance to puromycin, acriflavine and tetraphenylarsonium chloride. The protein is Putative multidrug resistance outer membrane protein MdtQ (mdtQ) of Escherichia coli (strain K12).